Here is a 124-residue protein sequence, read N- to C-terminus: Small ribosomal subunit protein uS12 (124 aa).

The segment at 1–27 (MPTINQLIRKPRKSQTEKTASPALQNC) is disordered. Positions 17–27 (EKTASPALQNC) are enriched in polar residues. 3-methylthioaspartic acid is present on Asp-89.

This sequence belongs to the universal ribosomal protein uS12 family. As to quaternary structure, part of the 30S ribosomal subunit. Contacts proteins S8 and S17. May interact with IF1 in the 30S initiation complex.

Functionally, with S4 and S5 plays an important role in translational accuracy. Interacts with and stabilizes bases of the 16S rRNA that are involved in tRNA selection in the A site and with the mRNA backbone. Located at the interface of the 30S and 50S subunits, it traverses the body of the 30S subunit contacting proteins on the other side and probably holding the rRNA structure together. The combined cluster of proteins S8, S12 and S17 appears to hold together the shoulder and platform of the 30S subunit. The polypeptide is Small ribosomal subunit protein uS12 (Borreliella afzelii (strain PKo) (Borrelia afzelii)).